The following is a 262-amino-acid chain: MGSRPCSPSACLAPWWGQQPGGPGPAKRSRLEEPAGPESRAAPSPEDPAGTPAVDALTSMVVLDAGCALRVPLEDVDLVLELAPMSVLRVSLGGHTLIVIPEVLLSSVDECSGAQGDWSAGLEVDVFLGAHGEDVVVEQEVCASVPEIAAEEEAYEEDADSEFPELWMDSAAGSAAGLYPSARSMFSPYREGPIRGPCALAPNPSSERRSPRPIFDLEFHLLEPVPSSPLQPLPPSPSPGPHARPELPERPPCKVRRRLFQE.

2 disordered regions span residues 1-52 and 225-262; these read MGSR…AGTP and VPSSPLQPLPPSPSPGPHARPELPERPPCKVRRRLFQE. The segment covering 226 to 242 has biased composition (pro residues); sequence PSSPLQPLPPSPSPGPH. Basic and acidic residues predominate over residues 243–252; sequence ARPELPERPP. Basic residues predominate over residues 253–262; sequence CKVRRRLFQE.

The protein belongs to the PRR23 family.

The chain is Proline-rich protein 23C (PRR23C) from Homo sapiens (Human).